A 212-amino-acid polypeptide reads, in one-letter code: Stromal cell-derived factor 2-like protein (212 aa).

Positions 1–19 (MKSLFLILILCITIPLIFA) are cleaved as a signal peptide. N-linked (GlcNAc...) asparagine glycosylation occurs at asparagine 20. 3 MIR domains span residues 29–86 (ITKV…IKGP), 94–149 (GTVV…VETE), and 151–206 (GKEW…TEEG).

Its subcellular location is the secreted. The sequence is that of Stromal cell-derived factor 2-like protein from Dictyostelium discoideum (Social amoeba).